A 104-amino-acid polypeptide reads, in one-letter code: Phosphoribosyl-ATP pyrophosphatase (104 aa).

The protein belongs to the PRA-PH family.

Its subcellular location is the cytoplasm. It carries out the reaction 1-(5-phospho-beta-D-ribosyl)-ATP + H2O = 1-(5-phospho-beta-D-ribosyl)-5'-AMP + diphosphate + H(+). The protein operates within amino-acid biosynthesis; L-histidine biosynthesis; L-histidine from 5-phospho-alpha-D-ribose 1-diphosphate: step 2/9. The protein is Phosphoribosyl-ATP pyrophosphatase of Streptococcus gordonii (strain Challis / ATCC 35105 / BCRC 15272 / CH1 / DL1 / V288).